The following is a 156-amino-acid chain: Ribosomal RNA large subunit methyltransferase H (156 aa).

S-adenosyl-L-methionine contacts are provided by residues leucine 73, glycine 104, and leucine 123–leucine 128.

This sequence belongs to the RNA methyltransferase RlmH family. As to quaternary structure, homodimer.

The protein localises to the cytoplasm. It catalyses the reaction pseudouridine(1915) in 23S rRNA + S-adenosyl-L-methionine = N(3)-methylpseudouridine(1915) in 23S rRNA + S-adenosyl-L-homocysteine + H(+). Its function is as follows. Specifically methylates the pseudouridine at position 1915 (m3Psi1915) in 23S rRNA. This Shewanella oneidensis (strain ATCC 700550 / JCM 31522 / CIP 106686 / LMG 19005 / NCIMB 14063 / MR-1) protein is Ribosomal RNA large subunit methyltransferase H.